The chain runs to 687 residues: Threonine--tRNA ligase (687 aa).

One can recognise a TGS domain in the interval 1 to 67 (MAHLIEAAPN…EQDSKFTPVP (67 aa)). Residues 266–572 (DHRRLGAELD…LLEHYAGAFP (307 aa)) are catalytic. The Zn(2+) site is built by cysteine 371, histidine 422, and histidine 549.

This sequence belongs to the class-II aminoacyl-tRNA synthetase family. As to quaternary structure, homodimer. Zn(2+) serves as cofactor.

Its subcellular location is the cytoplasm. It catalyses the reaction tRNA(Thr) + L-threonine + ATP = L-threonyl-tRNA(Thr) + AMP + diphosphate + H(+). Its function is as follows. Catalyzes the attachment of threonine to tRNA(Thr) in a two-step reaction: L-threonine is first activated by ATP to form Thr-AMP and then transferred to the acceptor end of tRNA(Thr). Also edits incorrectly charged L-seryl-tRNA(Thr). This Corynebacterium diphtheriae (strain ATCC 700971 / NCTC 13129 / Biotype gravis) protein is Threonine--tRNA ligase.